A 70-amino-acid polypeptide reads, in one-letter code: U2-agatoxin-Ao1q (70 aa).

Positions 1-20 (MRSIISLLLISAMVFSMIAA) are cleaved as a signal peptide. Residues 21-34 (VPEEEGLQLSEDER) constitute a propeptide that is removed on maturation. 2 cysteine pairs are disulfide-bonded: Cys-44-Cys-58 and Cys-52-Cys-68. Leu-69 carries the post-translational modification Leucine amide.

This sequence belongs to the neurotoxin 01 (U2-agtx) family. Post-translationally, does not contain a cysteine at position 53 which disrupts the cysteine framework. As to expression, expressed by the venom gland.

It is found in the secreted. Functionally, insect active toxin causing rapid but reversible paralysis in crickets. No activity shown in mammals. Does not show effect on mammalian voltage-gated calcium channels. The chain is U2-agatoxin-Ao1q from Agelena orientalis (Funnel-web spider).